We begin with the raw amino-acid sequence, 591 residues long: uncharacterized protein (591 aa).

A run of 4 helical transmembrane segments spans residues 389–409 (VYLG…SALI), 411–431 (GGSP…GGIL), 538–558 (GILP…FALS), and 571–591 (PIIS…FNLL).

It localises to the membrane. This is an uncharacterized protein from Mycoplasma (Bacteriophage L2).